Consider the following 390-residue polypeptide: Probable galacturonosyltransferase-like 9 (390 aa).

Residues 1–10 (MRLRFPMKSA) lie on the Cytoplasmic side of the membrane. The helical; Signal-anchor for type II membrane protein transmembrane segment at 11–31 (VLAFAIFLVFIPLFSVGIRMI) threads the bilayer. At 32-390 (PGRLTAVSAT…SELTEDSSFF (359 aa)) the chain is on the lumenal side. Residues Asn-205 and Asn-223 are each glycosylated (N-linked (GlcNAc...) asparagine).

It belongs to the glycosyltransferase 8 family.

It localises to the golgi apparatus membrane. It participates in glycan metabolism; pectin biosynthesis. In terms of biological role, may be involved in pectin and/or xylans biosynthesis in cell walls. The polypeptide is Probable galacturonosyltransferase-like 9 (GATL9) (Arabidopsis thaliana (Mouse-ear cress)).